We begin with the raw amino-acid sequence, 456 residues long: Cysteine--tRNA ligase (456 aa).

Cys-29 contacts Zn(2+). The 'HIGH' region signature appears at 31–41 (VTVYDYCHVGH). The Zn(2+) site is built by Cys-210, His-235, and Glu-239. Residues 267–271 (KMSKS) carry the 'KMSKS' region motif. ATP is bound at residue Lys-270.

The protein belongs to the class-I aminoacyl-tRNA synthetase family. Monomer. Requires Zn(2+) as cofactor.

Its subcellular location is the cytoplasm. It carries out the reaction tRNA(Cys) + L-cysteine + ATP = L-cysteinyl-tRNA(Cys) + AMP + diphosphate. In Hydrogenovibrio crunogenus (strain DSM 25203 / XCL-2) (Thiomicrospira crunogena), this protein is Cysteine--tRNA ligase.